Reading from the N-terminus, the 382-residue chain is Putative UDP-sugar transporter DDB_G0278631 (382 aa).

Transmembrane regions (helical) follow at residues 117 to 137 (FSAS…ILHI), 183 to 203 (MYSA…YFIL), 211 to 231 (IIAS…TDLS), 234 to 254 (SLGY…LIYV), 264 to 284 (YDML…LMIV), 302 to 322 (FQAY…CIFF), and 354 to 374 (IIIH…SIWY).

It belongs to the TPT transporter family. SLC35D subfamily.

The protein localises to the membrane. In terms of biological role, may be nvolved in the import of UDP-sugars. The chain is Putative UDP-sugar transporter DDB_G0278631 from Dictyostelium discoideum (Social amoeba).